We begin with the raw amino-acid sequence, 195 residues long: Cysteine/O-acetylserine efflux protein (195 aa).

Residues 1–9 (MTPMLLSAF) lie on the Periplasmic side of the membrane. The chain crosses the membrane as a helical span at residues 10–32 (WTYTLITALTPGPNNILALSAAT). Residues 33 to 46 (AHGFRQSIRVLAGM) are Cytoplasmic-facing. The helical transmembrane segment at 47 to 67 (SLGFLVVMLLCAGIAFSLAVI) threads the bilayer. The Periplasmic portion of the chain corresponds to 68-69 (DP). A helical membrane pass occupies residues 70–90 (AIIHLLSWVGAAYILWLAWKI). At 91-104 (ATSPAADENARPKP) the chain is on the cytoplasmic side. The chain crosses the membrane as a helical span at residues 105–125 (VGFWVSFGLQFVNVKIILYGI). The Periplasmic segment spans residues 126-141 (TALSTFVLPQTQALNW). A helical membrane pass occupies residues 142-162 (VIGVSILLALIGTFGNVCWAL). Residues 163–176 (AGHLFQRAFRHYGR) are Cytoplasmic-facing. Residues 177–194 (QLNIILALLLVYCAVRIF) form a helical membrane-spanning segment. Residue Y195 is a topological domain, periplasmic.

The protein belongs to the Rht family.

Its subcellular location is the cell inner membrane. It carries out the reaction O-acetyl-L-serine(in) = O-acetyl-L-serine(out). The enzyme catalyses L-cysteine(in) = L-cysteine(out). Functionally, exporter of O-acetylserine (OAS) and cysteine. The chain is Cysteine/O-acetylserine efflux protein (eamB) from Salmonella choleraesuis (strain SC-B67).